Here is a 337-residue protein sequence, read N- to C-terminus: Oxidoreductase andH (337 aa).

The protein belongs to the NmrA-type oxidoreductase family.

It participates in secondary metabolite biosynthesis; terpenoid biosynthesis. Oxidoreductase; part of the gene cluster that mediates the biosynthesis of anditomin, a fungal meroterpenoid. The first step of the pathway is the synthesis of 3,5-dimethylorsellinic acid (DMOA) by the polyketide synthase andM. DMOA is then converted to the phthalide compound 5,7-dihydroxy-4,6-dimethylphthalide (DHDMP) by the cytochrome P450 monooxygenase andK, which is further prenylated by the prenyltransferase andD to yield farnesyl-DHDMP. Further epoxidation by the FAD-dependent monooxygenase andE leads to epoxyfarnesyl-DHDMP. The next step involves the terpene cyclase andB that converts epoxyfarnesyl-DHDMP into preandiloid A through opening of the epoxide ring followed by the cyclization of the farnesyl moiety. Preandiloid A is in turn oxidized at the C-3 hydroxyl group to yield preandiloid B by the dehydrogenase andC. The dioxygenase andA is solely responsible for the dehydrogenation of preandiloid B leading to the enone preandiloid C, as well as for the intriguing structural rearrangement to generate the bicyclo[2.2.2]octane core, transforming preandiloid C into andiconin. FAD-binding monooxygenase andJ then produces andilesin D which is reduced by dehydrogenase andI to yield andilesin A. Action of acetyltransferase andG followed by a spontaneous acetate elimination leads then to andilesin B, which is in turn substrate of the short chain dehydrogenase andH to yield andilesin C. Finally, the dioxygenase andF catalyzes the transformation of andilesin C to anditomin. This is Oxidoreductase andH from Emericella variicolor (Aspergillus stellatus).